We begin with the raw amino-acid sequence, 293 residues long: Nucleotide-binding protein BA_5384/GBAA_5384/BAS5004 (293 aa).

14 to 21 (GMSGAGKT) contributes to the ATP binding site. A GTP-binding site is contributed by 65 to 68 (DLRG).

It belongs to the RapZ-like family.

Functionally, displays ATPase and GTPase activities. In Bacillus anthracis, this protein is Nucleotide-binding protein BA_5384/GBAA_5384/BAS5004.